We begin with the raw amino-acid sequence, 384 residues long: Putative RNA methyltransferase slr0064 (384 aa).

Residues 53-164 (LLYRINLWSR…QNHCQLSLDS (112 aa)) enclose the THUMP domain.

It belongs to the methyltransferase superfamily.

The sequence is that of Putative RNA methyltransferase slr0064 from Synechocystis sp. (strain ATCC 27184 / PCC 6803 / Kazusa).